The primary structure comprises 745 residues: Translation initiation factor IF-2 (745 aa).

The interval 1 to 154 (MSDKPRRDTG…PAARPVVRPR (154 aa)) is disordered. A compositionally biased stretch (polar residues) spans 36–56 (TGRSPNASTGGNRSAGNQAGN). Over residues 68–98 (ATTPAPNRNTPPAGARQGGAANARTGTPPVA) the composition is skewed to low complexity. A compositionally biased stretch (gly residues) spans 99–113 (RGGGGGVTPPTGRGG). Positions 114-126 (NNPRAARNQPRSR) are enriched in low complexity. Residues 127–138 (QQPEEREREHVL) show a composition bias toward basic and acidic residues. The tr-type G domain occupies 241–410 (PRPPVVTIMG…LLVADLEDLR (170 aa)). The interval 250–257 (GHVDHGKT) is G1. A GTP-binding site is contributed by 250–257 (GHVDHGKT). Positions 275-279 (GITQH) are G2. The tract at residues 296–299 (DTPG) is G3. GTP is bound by residues 296–300 (DTPGH) and 350–353 (NKID). Positions 350 to 353 (NKID) are G4. A G5 region spans residues 386-388 (SAR).

The protein belongs to the TRAFAC class translation factor GTPase superfamily. Classic translation factor GTPase family. IF-2 subfamily.

It is found in the cytoplasm. In terms of biological role, one of the essential components for the initiation of protein synthesis. Protects formylmethionyl-tRNA from spontaneous hydrolysis and promotes its binding to the 30S ribosomal subunits. Also involved in the hydrolysis of GTP during the formation of the 70S ribosomal complex. This Chloroflexus aurantiacus (strain ATCC 29366 / DSM 635 / J-10-fl) protein is Translation initiation factor IF-2.